A 357-amino-acid chain; its full sequence is Dynein axonemal assembly factor 10 (357 aa).

WD repeat units lie at residues 63-105 (EKAK…VPVY), 115-154 (NTID…DPVA), 162-205 (ENKR…LRWE), 207-249 (NIKN…PTKG), 257-297 (AHKS…QRSK), and 319-357 (LSTQ…LHKI).

As to quaternary structure, component of the PAQosome complex which is responsible for the biogenesis of several protein complexes and which consists of R2TP complex members RUVBL1, RUVBL2, RPAP3 and PIH1D1, URI complex members PFDN2, PFDN6, PDRG1, UXT and URI1 as well as ASDURF, POLR2E and DNAAF10/WDR92. Interacts with PIH1D1; the interaction associates DNAAF10 with the R2TP complex. Interacts with several dynein axonemal assembly factors.

The protein localises to the dynein axonemal particle. Key assembly factor specifically required for the stability of axonemal dynein heavy chains in cytoplasm. The polypeptide is Dynein axonemal assembly factor 10 (DNAAF10) (Bos taurus (Bovine)).